A 147-amino-acid chain; its full sequence is Nucleoside diphosphate kinase (147 aa).

ATP-binding residues include K9, F57, R85, T91, R102, and N112. H115 functions as the Pros-phosphohistidine intermediate in the catalytic mechanism.

The protein belongs to the NDK family. Mg(2+) is required as a cofactor.

The protein localises to the cytoplasm. It catalyses the reaction a 2'-deoxyribonucleoside 5'-diphosphate + ATP = a 2'-deoxyribonucleoside 5'-triphosphate + ADP. The catalysed reaction is a ribonucleoside 5'-diphosphate + ATP = a ribonucleoside 5'-triphosphate + ADP. Its function is as follows. Major role in the synthesis of nucleoside triphosphates other than ATP. The ATP gamma phosphate is transferred to the NDP beta phosphate via a ping-pong mechanism, using a phosphorylated active-site intermediate. The sequence is that of Nucleoside diphosphate kinase from Thermoplasma volcanium (strain ATCC 51530 / DSM 4299 / JCM 9571 / NBRC 15438 / GSS1).